Consider the following 566-residue polypeptide: NXPE family member 3 (566 aa).

Residues 1 to 32 form the signal peptide; sequence MEKYFPKYVPFFSLLALSGLLYLLWSITSLES. 5 N-linked (GlcNAc...) asparagine glycosylation sites follow: N64, N172, N242, N303, and N344.

It belongs to the NXPE family.

Its subcellular location is the secreted. The sequence is that of NXPE family member 3 (nxpe3) from Danio rerio (Zebrafish).